The primary structure comprises 200 residues: Recombination protein RecR (200 aa).

The segment at 57 to 72 (CRQCRTLTEQELCPQC) adopts a C4-type zinc-finger fold. Residues 80–175 (TQLCVVEGPM…VASRIAHGVP (96 aa)) form the Toprim domain.

The protein belongs to the RecR family.

May play a role in DNA repair. It seems to be involved in an RecBC-independent recombinational process of DNA repair. It may act with RecF and RecO. The sequence is that of Recombination protein RecR from Pseudomonas putida (strain W619).